Consider the following 427-residue polypeptide: Enolase 2 (427 aa).

Residue glutamine 163 participates in (2R)-2-phosphoglycerate binding. Glutamate 205 functions as the Proton donor in the catalytic mechanism. 3 residues coordinate Mg(2+): aspartate 242, glutamate 285, and aspartate 312. 4 residues coordinate (2R)-2-phosphoglycerate: lysine 337, arginine 366, serine 367, and lysine 388. Catalysis depends on lysine 337, which acts as the Proton acceptor.

Belongs to the enolase family. Component of the RNA degradosome, a multiprotein complex involved in RNA processing and mRNA degradation. Mg(2+) is required as a cofactor.

The protein resides in the cytoplasm. It localises to the secreted. The protein localises to the cell surface. The enzyme catalyses (2R)-2-phosphoglycerate = phosphoenolpyruvate + H2O. Its pathway is carbohydrate degradation; glycolysis; pyruvate from D-glyceraldehyde 3-phosphate: step 4/5. Catalyzes the reversible conversion of 2-phosphoglycerate (2-PG) into phosphoenolpyruvate (PEP). It is essential for the degradation of carbohydrates via glycolysis. The chain is Enolase 2 from Methylococcus capsulatus (strain ATCC 33009 / NCIMB 11132 / Bath).